Consider the following 176-residue polypeptide: MTIMIPAWVNGTLTSVEKLEAHVKGLRHKAVSVFVLKGDAVLMQQRAMCKYHTPGLWTNTCCTHPEWDEAPEVCAIRRLDEELGVRGLIPQHRHHLEYRADVGGGLIEHEVVDVFVAEADETLVVLPNPDEVMAVEWVHFDDLVDQVAQHPDRYTPWLRIYLRDHAATIFGELALL.

Mn(2+) contacts are provided by H22 and H28. Positions 26–160 (LRHKAVSVFV…PDRYTPWLRI (135 aa)) constitute a Nudix hydrolase domain. Residue C62 is part of the active site. H64 contributes to the Mn(2+) binding site. Mg(2+) is bound at residue E82. Positions 108 and 110 each coordinate Mn(2+). Residue E110 is part of the active site.

This sequence belongs to the IPP isomerase type 1 family. Mg(2+) serves as cofactor. Requires Mn(2+) as cofactor.

The protein localises to the cytoplasm. It carries out the reaction isopentenyl diphosphate = dimethylallyl diphosphate. The protein operates within isoprenoid biosynthesis; dimethylallyl diphosphate biosynthesis; dimethylallyl diphosphate from isopentenyl diphosphate: step 1/1. Its pathway is porphyrin-containing compound metabolism; chlorophyll biosynthesis. Functionally, catalyzes the 1,3-allylic rearrangement of the homoallylic substrate isopentenyl (IPP) to its highly electrophilic allylic isomer, dimethylallyl diphosphate (DMAPP). The protein is Isopentenyl-diphosphate Delta-isomerase of Roseobacter denitrificans (strain ATCC 33942 / OCh 114) (Erythrobacter sp. (strain OCh 114)).